Reading from the N-terminus, the 207-residue chain is Small ribosomal subunit protein uS4 (207 aa).

Residues serine 96–tyrosine 156 form the S4 RNA-binding domain.

This sequence belongs to the universal ribosomal protein uS4 family. Part of the 30S ribosomal subunit. Contacts protein S5. The interaction surface between S4 and S5 is involved in control of translational fidelity.

One of the primary rRNA binding proteins, it binds directly to 16S rRNA where it nucleates assembly of the body of the 30S subunit. In terms of biological role, with S5 and S12 plays an important role in translational accuracy. The protein is Small ribosomal subunit protein uS4 of Blochmanniella floridana.